A 143-amino-acid chain; its full sequence is Actinoxanthin (143 aa).

The signal sequence occupies residues 1–33; that stretch reads MSLRHMSRRASRFGVVAVASIGLAAAAQSVAFA. Disulfide bonds link C69/C78 and C119/C124.

Belongs to the neocarzinostatin family.

In terms of biological role, binds non-covalently to a chromophore which is the cytotoxic and mutagenic component of the antibiotic. The chromophore binds to DNA as a weak intercalator and causes single- and double-strand breaks. The protein is Actinoxanthin (axnA) of Streptomyces globisporus.